Consider the following 257-residue polypeptide: Ribonuclease PH (257 aa).

Residues Arg87 and Gly125–Arg127 contribute to the phosphate site.

It belongs to the RNase PH family. In terms of assembly, homohexameric ring arranged as a trimer of dimers.

The catalysed reaction is tRNA(n+1) + phosphate = tRNA(n) + a ribonucleoside 5'-diphosphate. In terms of biological role, phosphorolytic 3'-5' exoribonuclease that plays an important role in tRNA 3'-end maturation. Removes nucleotide residues following the 3'-CCA terminus of tRNAs; can also add nucleotides to the ends of RNA molecules by using nucleoside diphosphates as substrates, but this may not be physiologically important. Probably plays a role in initiation of 16S rRNA degradation (leading to ribosome degradation) during starvation. The sequence is that of Ribonuclease PH from Geobacillus kaustophilus (strain HTA426).